An 87-amino-acid chain; its full sequence is Small ribosomal subunit protein bS16 (87 aa).

It belongs to the bacterial ribosomal protein bS16 family.

This is Small ribosomal subunit protein bS16 from Ehrlichia chaffeensis (strain ATCC CRL-10679 / Arkansas).